Consider the following 282-residue polypeptide: 4-hydroxybenzoate octaprenyltransferase (282 aa).

Transmembrane regions (helical) follow at residues 17–37 (IGIL…NQGF), 40–60 (IDLL…GCVI), 90–110 (AFIL…KLPI), 113–133 (FYFA…KRFL), 135–155 (APQL…FIAS), 163–183 (FIVL…MYAM), 207–227 (LIIA…AINK), 231–251 (WFFY…LKLI), and 262–282 (AFLV…LALI).

Belongs to the UbiA prenyltransferase family. Requires Mg(2+) as cofactor.

It is found in the cell inner membrane. It catalyses the reaction all-trans-octaprenyl diphosphate + 4-hydroxybenzoate = 4-hydroxy-3-(all-trans-octaprenyl)benzoate + diphosphate. The protein operates within cofactor biosynthesis; ubiquinone biosynthesis. In terms of biological role, catalyzes the prenylation of para-hydroxybenzoate (PHB) with an all-trans polyprenyl group. Mediates the second step in the final reaction sequence of ubiquinone-8 (UQ-8) biosynthesis, which is the condensation of the polyisoprenoid side chain with PHB, generating the first membrane-bound Q intermediate 3-octaprenyl-4-hydroxybenzoate. The sequence is that of 4-hydroxybenzoate octaprenyltransferase from Legionella pneumophila (strain Corby).